The sequence spans 312 residues: Ribonuclease Z (312 aa).

7 residues coordinate Zn(2+): His-62, His-64, Asp-66, His-67, His-144, Asp-215, and His-273. Residue Asp-66 is the Proton acceptor of the active site.

Belongs to the RNase Z family. In terms of assembly, homodimer. The cofactor is Zn(2+).

The catalysed reaction is Endonucleolytic cleavage of RNA, removing extra 3' nucleotides from tRNA precursor, generating 3' termini of tRNAs. A 3'-hydroxy group is left at the tRNA terminus and a 5'-phosphoryl group is left at the trailer molecule.. Functionally, zinc phosphodiesterase, which displays some tRNA 3'-processing endonuclease activity. Probably involved in tRNA maturation, by removing a 3'-trailer from precursor tRNA. The sequence is that of Ribonuclease Z from Prochlorococcus marinus (strain MIT 9312).